The following is a 279-amino-acid chain: Shikimate dehydrogenase (NADP(+)) (279 aa).

Shikimate is bound by residues 20–22 (SRS) and Thr67. The Proton acceptor role is filled by Lys71. Asp83 is a binding site for NADP(+). Asn92 and Asp108 together coordinate shikimate. NADP(+) is bound by residues 134–138 (GAGGA) and Leu223. Tyr225 is a binding site for shikimate. Position 246 (Gly246) interacts with NADP(+).

Belongs to the shikimate dehydrogenase family. As to quaternary structure, homodimer.

The enzyme catalyses shikimate + NADP(+) = 3-dehydroshikimate + NADPH + H(+). It participates in metabolic intermediate biosynthesis; chorismate biosynthesis; chorismate from D-erythrose 4-phosphate and phosphoenolpyruvate: step 4/7. Its function is as follows. Involved in the biosynthesis of the chorismate, which leads to the biosynthesis of aromatic amino acids. Catalyzes the reversible NADPH linked reduction of 3-dehydroshikimate (DHSA) to yield shikimate (SA). The protein is Shikimate dehydrogenase (NADP(+)) of Cereibacter sphaeroides (strain ATCC 17025 / ATH 2.4.3) (Rhodobacter sphaeroides).